Here is a 901-residue protein sequence, read N- to C-terminus: MAGQEDEYDPILDNKREAEAKSQVSVAADKNMAPSTSGTPIHRSGSRPQLDLSKAEIQGNLEERDPTILLPNQSDDISHLALDIGGSLIKLLYFSRHEDYSNDDDKRKRTIKERLGITNGNLRSYPVLGGRLHFVKFETHKINECLDFIHSKQLHRRDPYPWSSKTLPLGTGVIKVTGGGAFKFADLFKERLGVSIEKEDEMHCLVSGANFLLKAIRHEAFTHMEGEKEFVQIDPNDLYPYLLVNVGSGVSIIKVDGEGKFERVSGTNVGGGTYWGLGRLLTKCKSFDELLELSQKGDNSAIDMLVGDIYGGMDYSKIGLSASTIASSFGKAISENKELDDYRPEDISLSLLRMISYNIGQISYLNALRFGLKRIFFGGFFIRGHAYTMDTISFAVHFWSKGEMQAMFLRHEGFLGALGAFMSYEKHGLDDLMSHQLVERFPMGAPYTGGNIHGPPLGDLDEKISWMEKFVRRGTEITAPVPMTPSKTTGLGGFEVPSSRGSALRSDASALNVGVLHLVPTLEVFPLLADPKTYEPNTIDLSDQGEREYWLKVLSEHLPDLVDTAVASEGGTEDAKRRGDAFARAFSAHLARLMEEPAAYGKLGLANLLELREECLREFQFVDAYRSIKQRENEASLAVLPDLLEELDSMSEEARLLTLIEGVLAANIFDWGSRACVDLYHKGTIIEIYRMSRNKMQRPWRVDDFDAFKERMLGSGGKQPHRHKRALLFVDNSGADVILGMLPLAREFLRRGTEVVLVANSLPALNDVTAMELPDIVAGAAKHCDILRRAAEMGGLLVDAMVNPGDGSKKDSTSAPLMVVENGCGSPCIDLRQVSSELAAAAKDADLVVLEGMGRALHTNFNAQFQCEALKLAMVKNQRLAEKLIKGNIYDCVCRYEPPSL.

Residues 1–10 (MAGQEDEYDP) show a composition bias toward acidic residues. A disordered region spans residues 1–50 (MAGQEDEYDPILDNKREAEAKSQVSVAADKNMAPSTSGTPIHRSGSRPQL). Residues 1 to 466 (MAGQEDEYDP…LGDLDEKISW (466 aa)) are pantothenate kinase. A 4'-phosphopantetheine phosphatase region spans residues 467–901 (MEKFVRRGTE…CVCRYEPPSL (435 aa)). Mn(2+)-binding residues include Asp-731, Asn-732, and Asp-767. The Subfamily II EGMGR motif signature appears at 851-855 (EGMGR).

It in the N-terminal section; belongs to the type II pantothenate kinase family. This sequence in the C-terminal section; belongs to the damage-control phosphatase family. Phosphopantetheine phosphatase II subfamily. Requires Mn(2+) as cofactor. It depends on Ni(2+) as a cofactor. As to expression, highly expressed in leaves and developing seeds. Expressed in roots, stems and flowers.

It catalyses the reaction (R)-pantothenate + ATP = (R)-4'-phosphopantothenate + ADP + H(+). It carries out the reaction (R)-4'-phosphopantothenate + H2O = (R)-pantothenate + phosphate. The enzyme catalyses (R)-4'-phosphopantetheine + H2O = (R)-pantetheine + phosphate. The catalysed reaction is (R)-4'-phosphopantetheine sulfonate + H2O = (R)-pantetheine sulfonate + phosphate. Its pathway is cofactor biosynthesis; coenzyme A biosynthesis; CoA from (R)-pantothenate: step 1/5. Its activity is regulated as follows. Activity is strongly promoted by Co(2+), Ni(2+) and Mn(2+). Activity is inhibited by EDTA. Functionally, catalyzes the phosphorylation of pantothenate the first step in CoA biosynthesis. May play a role in the physiological regulation of the intracellular CoA concentration. Functionally redudant with PANK1. The phosphatase activity shows preference for normal or oxidatively damaged intermediates of 4'-phosphopantetheine, which provides strong indirect evidence that the phosphatase activity pre-empts damage in the CoA pathway. Hydrolyzing excess 4'-phosphopantetheine could constitute a directed overflow mechanism to prevent its oxidation to the S-sulfonate, sulfonate, or other forms. Hydrolyzing 4'-phosphopantetheine sulfonate or S-sulfonate would forestall their conversion to inactive forms of CoA and acyl carrier protein. In Arabidopsis thaliana (Mouse-ear cress), this protein is Pantothenate kinase 2 (PANK2).